Here is a 1236-residue protein sequence, read N- to C-terminus: MTYASKYKKLTPIDHVLLRPEMYVGSIETQPTPMYIFDPEKGRMVWETMRVNQGLLKIVDEILLNAADNINNSKGSVRQTYISIHISDTGEITVENDGAGLPIVRSREHKMYIPEMVFGHLLTSSNYNNDSTSTTAGRHGYGAKLTNILSTKFSVVCRTDGRESHMSWTDHMRMATAPRVNRVDPKEKSVTRVKFMPDYAHFGFPNASISLDMKRVLHKRIMDLAAMFSKIEVRLNNVPFGFRTFTDYARLYSLPGLDGSMPPEPFVYTSPNGSVAYVPQLTQSPKRIVGVVNGVVTYNGGTHCNAAMDILDSCLDSLSKNFKKNGKVVDTNRVQRHFTVLVFLIQTQPKFDSQSKARLVSTVTMPRMPKNTLEKYLERMPFLEAHVNSMDDQLANELNKEIGAGRRLSSKTLISAITKLVDATSSQPDGRNIRTLIITEGDSAKALALNSLSSEQKKYCGVFPLRGKLLNVRNKNLKRLKTCKGLQDLFLSLGLELGKEYRSPAELRYQRLLVMTDQDADGSHIKGLVINAFESLWPKLLQNNPGYISLFSTPIVKIKVSGKSKEVIAFHSFRDFHRWQRAHPSARYTAKYYKGLGTSTTAEGKEYFADMEKNIMQLTVDARDHQLLDSVFDAAEVEWRKEWMTKANAFQGEVDIDRSKKTLTIPEFVHKEMVHFALVGNARAIPHCVDGLKPSQRKILWAMLRRHNSEASKVAQLSGYISEASAFHHGEASLQETIVKMAQNFTGGNNINLLVPEGQFGSRQQLGNDHAAPRYIFTKLSRFGRLLFPEEDDPLLDYMDEEGTFVEPHHYVPILPMLLCNGAVGIGFGFATTIPSFHPLDVSAAVRAMINGESAKQVVRNLVPWAVGFQGTVRRGPDNEFIAVGKYTAHPNGRFHISEIPWMTSIEAFRLHISSLASADVVQRIADYSGANHIDIDLIVRDGSLTTWAECETDLALAQRIYINGTVFSPTGTLSPIDSDLSPVLQWHYDRRLDLYKRRRTRKIGLMKMDLARLQSTRKFVEHFRQGQIDFLNATDDTLHKTCVKLGLVRVDESFDYILKKPITFFTRTSTEKLQADIAKTQAQIEELKRTTPVKMWLTELDKFDKTFQEYERVLINSIQKEQRSSSITGGVELPALRQPLLMLGASAKGATAYRVHACQYEKPPPSKRRPGESVGGARPSDSAARTVGKRLVGSRSEFKNKKPMSRKNNVKVSLSTRVAQXPGAQLGRLLPHVLM.

Residues N65, N96, 124-126 (SSN), 137-144 (GRHGYGAK), and 354-356 (QSK) each bind ATP. A Toprim domain is found at 434–548 (RTLIITEGDS…KLLQNNPGYI (115 aa)). E440, D517, and D519 together coordinate Mg(2+). The Topo IIA-type catalytic domain maps to 685 to 1101 (IPHCVDGLKP…TPVKMWLTEL (417 aa)). Residue Y775 is the O-(5'-phospho-DNA)-tyrosine intermediate of the active site. The interaction with DNA stretch occupies residues 956 to 965 (ALAQRIYING). A disordered region spans residues 1161-1211 (YEKPPPSKRRPGESVGGARPSDSAARTVGKRLVGSRSEFKNKKPMSRKNNV).

It belongs to the type II topoisomerase family. In terms of assembly, homodimer. It depends on Mg(2+) as a cofactor. The cofactor is Mn(2+). Ca(2+) serves as cofactor.

It is found in the nucleus. The enzyme catalyses ATP-dependent breakage, passage and rejoining of double-stranded DNA.. Its function is as follows. Control of topological states of DNA by transient breakage and subsequent rejoining of DNA strands. Topoisomerase II makes double-strand breaks. This Leishmania chagasi protein is DNA topoisomerase 2 (TOP2).